Here is a 444-residue protein sequence, read N- to C-terminus: MEVKAKQLDSVNATASVKIPSGMIKSEVENLAKKASKSVKMDGFRPGKVPVSAVLKRYERELTQDAEQNLFKSAVNSALQELKKESKELVGEPYFEKFDRKDGEIIAELILSFKPEIKLDGYEKLIPEYQTPKVSKKEIDEKKDELLKRFATPEAIKTKRVLKEGDFAKFDFEGFVDDKAFEGGKAENYVLEIGSKQFIPGFEDGMVGMKIGEEKDIKVTFPKEYGAAHLAGKDAVFKVKLHEIQELKIPELDDEMLKKLLPGEEKASVEVLDEKLKEQIKNEKLFKLVNDELKGKFADALIEKYNFDLPKGIVEQETDMQMRAAFNTFSEKEIEELKASKEKYQEKRDSFKEEAQKSVKLTFIIDELAKLRKIEVNDQELIQAIYFEAYRYGMNPKEHLENYKKQGALPAVKMALIEEKLFNDIFMPKTEKSEKASKKEKEDK.

The 86-residue stretch at 165-250 folds into the PPIase FKBP-type domain; it reads GDFAKFDFEG…LHEIQELKIP (86 aa).

It belongs to the FKBP-type PPIase family. Tig subfamily.

The protein resides in the cytoplasm. The catalysed reaction is [protein]-peptidylproline (omega=180) = [protein]-peptidylproline (omega=0). Functionally, involved in protein export. Acts as a chaperone by maintaining the newly synthesized protein in an open conformation. Functions as a peptidyl-prolyl cis-trans isomerase. The protein is Trigger factor of Campylobacter jejuni subsp. jejuni serotype O:6 (strain 81116 / NCTC 11828).